The sequence spans 497 residues: Type II secretion system protein E (497 aa).

255–262 (GPTGSGKS) is an ATP binding site. Cys388, Cys391, Cys419, and Cys422 together coordinate Zn(2+).

Belongs to the GSP E family. In terms of assembly, forms homooligomers; most probably hexamers. Interacts with PulL/GspL. Zn(2+) serves as cofactor.

It is found in the cell inner membrane. It catalyses the reaction ATP + H2O + cellular proteinSide 1 = ADP + phosphate + cellular proteinSide 2.. Its function is as follows. ATPase component of the type II secretion system required for the energy-dependent secretion of extracellular factors such as proteases and toxins from the periplasm. Acts as a molecular motor to provide the energy that is required for assembly of the pseudopilus and the extrusion of substrates generated in the cytoplasm. In Klebsiella pneumoniae, this protein is Type II secretion system protein E (pulE).